A 446-amino-acid polypeptide reads, in one-letter code: Histidinol dehydrogenase homolog (446 aa).

H266 contacts Zn(2+). Residues E334 and H335 each act as proton acceptor in the active site. Zn(2+) is bound at residue H427.

Belongs to the histidinol dehydrogenase family. Requires Zn(2+) as cofactor.

This chain is Histidinol dehydrogenase homolog, found in Colwellia psychrerythraea (strain 34H / ATCC BAA-681) (Vibrio psychroerythus).